A 353-amino-acid polypeptide reads, in one-letter code: Paraneoplastic antigen Ma1 (353 aa).

It belongs to the PNMA family. As to expression, testis- and brain-specific. In some cancer patients, specifically expressed by paraneoplastic tumor cells.

It is found in the nucleus. The protein resides in the nucleolus. The protein is Paraneoplastic antigen Ma1 (PNMA1) of Homo sapiens (Human).